The chain runs to 169 residues: Probable inosine/xanthosine triphosphatase (169 aa).

A Mg(2+)-binding site is contributed by Asp58.

It belongs to the YjjX NTPase family. Homodimer. It depends on Mg(2+) as a cofactor. Requires Mn(2+) as cofactor.

It catalyses the reaction XTP + H2O = XDP + phosphate + H(+). The enzyme catalyses ITP + H2O = IDP + phosphate + H(+). In terms of biological role, phosphatase that hydrolyzes non-canonical purine nucleotides such as XTP and ITP to their respective diphosphate derivatives. Probably excludes non-canonical purines from DNA/RNA precursor pool, thus preventing their incorporation into DNA/RNA and avoiding chromosomal lesions. The chain is Probable inosine/xanthosine triphosphatase from Archaeoglobus fulgidus (strain ATCC 49558 / DSM 4304 / JCM 9628 / NBRC 100126 / VC-16).